Here is a 455-residue protein sequence, read N- to C-terminus: Bifunctional protein GlmU (455 aa).

The interval 1–226 is pyrophosphorylase; that stretch reads MSLDIVILAA…AMEVQGANDR (226 aa). Residues 8–11, Lys-22, Gln-73, 78–79, 99–101, Gly-136, Glu-151, Asn-166, and Asn-224 each bind UDP-N-acetyl-alpha-D-glucosamine; these read LAAG, GT, and YGD. Residue Asp-101 coordinates Mg(2+). Asn-224 serves as a coordination point for Mg(2+). The segment at 227 to 247 is linker; the sequence is KQLSELERHYQLREARRLMAG. The N-acetyltransferase stretch occupies residues 248–455; sequence GVTLRDPARF…WKRPVKIRKD (208 aa). Positions 330 and 348 each coordinate UDP-N-acetyl-alpha-D-glucosamine. The active-site Proton acceptor is His-360. Residues Tyr-363 and Asn-374 each contribute to the UDP-N-acetyl-alpha-D-glucosamine site. Acetyl-CoA contacts are provided by residues Ala-377, 383–384, Ser-402, Ala-420, and Arg-437; that span reads NY.

It in the N-terminal section; belongs to the N-acetylglucosamine-1-phosphate uridyltransferase family. This sequence in the C-terminal section; belongs to the transferase hexapeptide repeat family. In terms of assembly, homotrimer. It depends on Mg(2+) as a cofactor.

The protein localises to the cytoplasm. The enzyme catalyses alpha-D-glucosamine 1-phosphate + acetyl-CoA = N-acetyl-alpha-D-glucosamine 1-phosphate + CoA + H(+). It carries out the reaction N-acetyl-alpha-D-glucosamine 1-phosphate + UTP + H(+) = UDP-N-acetyl-alpha-D-glucosamine + diphosphate. It participates in nucleotide-sugar biosynthesis; UDP-N-acetyl-alpha-D-glucosamine biosynthesis; N-acetyl-alpha-D-glucosamine 1-phosphate from alpha-D-glucosamine 6-phosphate (route II): step 2/2. The protein operates within nucleotide-sugar biosynthesis; UDP-N-acetyl-alpha-D-glucosamine biosynthesis; UDP-N-acetyl-alpha-D-glucosamine from N-acetyl-alpha-D-glucosamine 1-phosphate: step 1/1. Its pathway is bacterial outer membrane biogenesis; LPS lipid A biosynthesis. In terms of biological role, catalyzes the last two sequential reactions in the de novo biosynthetic pathway for UDP-N-acetylglucosamine (UDP-GlcNAc). The C-terminal domain catalyzes the transfer of acetyl group from acetyl coenzyme A to glucosamine-1-phosphate (GlcN-1-P) to produce N-acetylglucosamine-1-phosphate (GlcNAc-1-P), which is converted into UDP-GlcNAc by the transfer of uridine 5-monophosphate (from uridine 5-triphosphate), a reaction catalyzed by the N-terminal domain. This chain is Bifunctional protein GlmU, found in Pseudomonas savastanoi pv. phaseolicola (strain 1448A / Race 6) (Pseudomonas syringae pv. phaseolicola (strain 1448A / Race 6)).